Consider the following 542-residue polypeptide: Organic anion transporter 3 (542 aa).

Topologically, residues 1-9 are cytoplasmic; the sequence is MTFSEILDR. S4 is modified (phosphoserine). A helical transmembrane segment spans residues 10 to 30; sequence VGSMGPFQFLHVALLGFPILG. Residues 31-123 are Extracellular-facing; that stretch reads MANHNLLQIF…LVCSSNKLKE (93 aa). N-linked (GlcNAc...) asparagine glycosylation is present at N86. The helical transmembrane segment at 124–144 threads the bilayer; it reads MAQSIFMAGILIGGLVLGDLS. The Cytoplasmic portion of the chain corresponds to 145–150; it reads DRFGRK. Residues 151–171 form a helical membrane-spanning segment; the sequence is PILTCCYLLLAASGSSTAFSP. Residues 172–176 lie on the Extracellular side of the membrane; that stretch reads TLPIY. Residues 177–197 form a helical membrane-spanning segment; the sequence is MVFRFLCGFSISGISLSTVIL. The Cytoplasmic segment spans residues 198 to 212; it reads NVEWVPTKMRAITST. Residues 213-233 form a helical membrane-spanning segment; the sequence is AIGYCYTIGQFILPGLAYAIP. At 234–236 the chain is on the extracellular side; that stretch reads QWR. A helical membrane pass occupies residues 237–257; that stretch reads WLQLTVSVPYFIFSLLSWWIP. The Cytoplasmic portion of the chain corresponds to 258–327; that stretch reads ESIRWLVLAG…FRTPILRRVT (70 aa). A helical transmembrane segment spans residues 328 to 348; that stretch reads LCLSLAWFATGFAYYSLAMGV. Over 349–354 the chain is Extracellular; sequence EEFGVN. The chain crosses the membrane as a helical span at residues 355 to 375; the sequence is IYILQIIFGGVDIPAKFITIL. Topologically, residues 376 to 389 are cytoplasmic; it reads SLSYLGRHITQGAA. The chain crosses the membrane as a helical span at residues 390-410; sequence LILAGAAILSLIFVPMDMSLL. A topological domain (extracellular) is located at residue R411. A helical membrane pass occupies residues 412-432; it reads TILAVFGKGCLSGSFSCLFLY. Residues 433 to 471 lie on the Cytoplasmic side of the membrane; that stretch reads TSELFPTVIRQTGMGISNVWARVGSMISPLVKITGEIQP. Residues 472-492 traverse the membrane as a helical segment; it reads FIPNIIYGTVALLGGSAALFL. The Extracellular portion of the chain corresponds to 493-542; that stretch reads PETLNQPLPETLEDMENWFLQSKKLKQEPEAEKASQRIPLQPSGPGVDRS. Positions 518-527 are enriched in basic and acidic residues; that stretch reads KQEPEAEKAS. Residues 518–542 are disordered; that stretch reads KQEPEAEKASQRIPLQPSGPGVDRS.

The protein belongs to the major facilitator (TC 2.A.1) superfamily. Organic cation transporter (TC 2.A.1.19) family.

It localises to the basolateral cell membrane. The catalysed reaction is estrone 3-sulfate(out) + glutarate(in) = estrone 3-sulfate(in) + glutarate(out). It carries out the reaction estrone 3-sulfate(in) + 2-oxoglutarate(out) = estrone 3-sulfate(out) + 2-oxoglutarate(in). The enzyme catalyses glutarate(in) + 2-oxoglutarate(out) = glutarate(out) + 2-oxoglutarate(in). It catalyses the reaction urate(in) + 2-oxoglutarate(out) = urate(out) + 2-oxoglutarate(in). The catalysed reaction is taurocholate(out) + glutarate(in) = taurocholate(in) + glutarate(out). It carries out the reaction dehydroepiandrosterone 3-sulfate(out) + glutarate(in) = dehydroepiandrosterone 3-sulfate(in) + glutarate(out). The enzyme catalyses prostaglandin F2alpha(out) + glutarate(in) = prostaglandin F2alpha(in) + glutarate(out). It catalyses the reaction prostaglandin F2alpha(out) + 2-oxoglutarate(in) = prostaglandin F2alpha(in) + 2-oxoglutarate(out). The catalysed reaction is (R)-carnitine(out) + 2-oxoglutarate(in) = (R)-carnitine(in) + 2-oxoglutarate(out). It carries out the reaction glutarate(in) + (R)-carnitine(out) = glutarate(out) + (R)-carnitine(in). The enzyme catalyses prostaglandin E2(out) + 2-oxoglutarate(in) = prostaglandin E2(in) + 2-oxoglutarate(out). It catalyses the reaction prostaglandin E2(out) + glutarate(in) = prostaglandin E2(in) + glutarate(out). The catalysed reaction is urate(in) + glutarate(out) = urate(out) + glutarate(in). It carries out the reaction taurocholate(out) + 2-oxoglutarate(in) = taurocholate(in) + 2-oxoglutarate(out). The enzyme catalyses dehydroepiandrosterone 3-sulfate(out) + 2-oxoglutarate(in) = dehydroepiandrosterone 3-sulfate(in) + 2-oxoglutarate(out). It catalyses the reaction kynurenate(out) + a dicarboxylate(in) = kynurenate(in) + a dicarboxylate(out). The catalysed reaction is (indol-3-yl)acetate(out) + a dicarboxylate(in) = (indol-3-yl)acetate(in) + a dicarboxylate(out). It carries out the reaction indoxyl sulfate(out) + a dicarboxylate(in) = indoxyl sulfate(in) + a dicarboxylate(out). The enzyme catalyses N-benzoylglycine(out) + a dicarboxylate(in) = N-benzoylglycine(in) + a dicarboxylate(out). It catalyses the reaction 3-carboxy-4-methyl-5-propyl-2-furanpropanoate(out) + a dicarboxylate(in) = 3-carboxy-4-methyl-5-propyl-2-furanpropanoate(in) + a dicarboxylate(out). The catalysed reaction is (6R)-L-erythro-5,6,7,8-tetrahydrobiopterin(out) + a dicarboxylate(in) = (6R)-L-erythro-5,6,7,8-tetrahydrobiopterin(in) + a dicarboxylate(out). It carries out the reaction L-erythro-7,8-dihydrobiopterin(out) + a dicarboxylate(in) = L-erythro-7,8-dihydrobiopterin(in) + a dicarboxylate(out). The enzyme catalyses L-sepiapterin(out) + a dicarboxylate(in) = L-sepiapterin(in) + a dicarboxylate(out). Functions as an organic anion/dicarboxylate exchanger that couples organic anion uptake indirectly to the sodium gradient. Transports organic anions such as estrone 3-sulfate (E1S) and urate in exchange for dicarboxylates such as glutarate or ketoglutarate (2-oxoglutarate). Plays an important role in the excretion of endogenous and exogenous organic anions, especially from the kidney and the brain. E1S transport is pH- and chloride-dependent and may also involve E1S/cGMP exchange. Responsible for the transport of prostaglandin E2 (PGE2) and prostaglandin F2(alpha) (PGF2(alpha)) in the basolateral side of the renal tubule. Involved in the transport of neuroactive tryptophan metabolites kynurenate and xanthurenate. Functions as a biopterin transporters involved in the uptake and the secretion of coenzymes tetrahydrobiopterin (BH4), dihydrobiopterin (BH2) and sepiapterin to urine, thereby determining baseline levels of blood biopterins. May be involved in the basolateral transport of steviol, a metabolite of the popular sugar substitute stevioside. May participate in the detoxification/ renal excretion of drugs and xenobiotics, such as the histamine H(2)-receptor antagonists fexofenadine and cimetidine, the antibiotic benzylpenicillin (PCG), the anionic herbicide 2,4-dichloro-phenoxyacetate (2,4-D), the diagnostic agent p-aminohippurate (PAH), the antiviral acyclovir (ACV), and the mycotoxin ochratoxin (OTA), by transporting these exogenous organic anions across the cell membrane in exchange for dicarboxylates such as 2-oxoglutarate. Contributes to the renal uptake of potent uremic toxins (indoxyl sulfate (IS), indole acetate (IA), hippurate/N-benzoylglycine (HA) and 3-carboxy-4-methyl-5-propyl-2-furanpropionate (CMPF)), pravastatin, PCG, E1S and dehydroepiandrosterone sulfate (DHEAS), and is partly involved in the renal uptake of temocaprilat (an angiotensin-converting enzyme (ACE) inhibitor). May contribute to the release of cortisol in the adrenals. Involved in one of the detoxification systems on the choroid plexus (CP), removes substrates such as E1S or taurocholate (TC), PCG, 2,4-D and PAH, from the cerebrospinal fluid (CSF) to the blood for eventual excretion in urine and bile. Also contributes to the uptake of several other organic compounds such as the prostanoids prostaglandin E(2) and prostaglandin F(2-alpha), L-carnitine, and the therapeutic drugs allopurinol, 6-mercaptopurine (6-MP) and 5-fluorouracil (5-FU). Mediates the transport of PAH, PCG, and the statins pravastatin and pitavastatin, from the cerebrum into the blood circulation across the blood-brain barrier (BBB). In summary, plays a role in the efflux of drugs and xenobiotics, helping reduce their undesired toxicological effects on the body. In Oryctolagus cuniculus (Rabbit), this protein is Organic anion transporter 3 (SLC22A8).